The primary structure comprises 291 residues: Elongation factor Ts (291 aa).

Positions 79–82 (TDFV) are involved in Mg(2+) ion dislocation from EF-Tu.

This sequence belongs to the EF-Ts family.

Its subcellular location is the cytoplasm. Its function is as follows. Associates with the EF-Tu.GDP complex and induces the exchange of GDP to GTP. It remains bound to the aminoacyl-tRNA.EF-Tu.GTP complex up to the GTP hydrolysis stage on the ribosome. This chain is Elongation factor Ts, found in Dinoroseobacter shibae (strain DSM 16493 / NCIMB 14021 / DFL 12).